The primary structure comprises 125 residues: UPF0231 protein APP7_1023 (125 aa).

The protein belongs to the UPF0231 family.

The polypeptide is UPF0231 protein APP7_1023 (Actinobacillus pleuropneumoniae serotype 7 (strain AP76)).